The primary structure comprises 202 residues: MEHYISLFVKAVFIENLALSFFLGMCTFLAVSKKVTTSIGLGVAVIVVLGISVPVNNLVYHAVLAPGSLTWLGYPDADLSFLRFLTFIGVIAALVQILEMALDKFFPALYNALGIFLPLITVNCAIFGAVSFMVERNYNFGESVVYGIGAGVGWALAITLLAGIREKMKYSDVPDGLRGLGITFITVGLMALGFMSFSGISL.

6 helical membrane passes run 11–31, 35–55, 81–101, 114–134, 144–164, and 180–200; these read AVFI…FLAV, VTTS…SVPV, FLRF…LEMA, GIFL…SFMV, VVYG…LAGI, and LGIT…FSGI.

The protein belongs to the NqrDE/RnfAE family. Composed of six subunits; NqrA, NqrB, NqrC, NqrD, NqrE and NqrF.

The protein resides in the cell inner membrane. The enzyme catalyses a ubiquinone + n Na(+)(in) + NADH + H(+) = a ubiquinol + n Na(+)(out) + NAD(+). Its function is as follows. NQR complex catalyzes the reduction of ubiquinone-1 to ubiquinol by two successive reactions, coupled with the transport of Na(+) ions from the cytoplasm to the periplasm. NqrA to NqrE are probably involved in the second step, the conversion of ubisemiquinone to ubiquinol. This chain is Na(+)-translocating NADH-quinone reductase subunit E, found in Pseudoalteromonas translucida (strain TAC 125).